Consider the following 161-residue polypeptide: Protein-export protein SecB (161 aa).

The disordered stretch occupies residues 141 to 161 (KKQQETAGEQPDQPADTITRH).

This sequence belongs to the SecB family. Homotetramer, a dimer of dimers. One homotetramer interacts with 1 SecA dimer.

It localises to the cytoplasm. In terms of biological role, one of the proteins required for the normal export of preproteins out of the cell cytoplasm. It is a molecular chaperone that binds to a subset of precursor proteins, maintaining them in a translocation-competent state. It also specifically binds to its receptor SecA. The polypeptide is Protein-export protein SecB (Nitrosomonas europaea (strain ATCC 19718 / CIP 103999 / KCTC 2705 / NBRC 14298)).